Reading from the N-terminus, the 151-residue chain is Deoxyuridine 5'-triphosphate nucleotidohydrolase (151 aa).

Substrate is bound by residues 70 to 72, asparagine 83, 87 to 89, and methionine 97; these read RSG and LID.

It belongs to the dUTPase family. Homotrimer. Mg(2+) serves as cofactor.

It catalyses the reaction dUTP + H2O = dUMP + diphosphate + H(+). It functions in the pathway pyrimidine metabolism; dUMP biosynthesis; dUMP from dCTP (dUTP route): step 2/2. In terms of biological role, this enzyme is involved in nucleotide metabolism: it produces dUMP, the immediate precursor of thymidine nucleotides and it decreases the intracellular concentration of dUTP so that uracil cannot be incorporated into DNA. The chain is Deoxyuridine 5'-triphosphate nucleotidohydrolase from Escherichia coli O45:K1 (strain S88 / ExPEC).